A 218-amino-acid polypeptide reads, in one-letter code: Large ribosomal subunit protein uL3 (218 aa).

Positions 121–163 are disordered; that stretch reads GYQKRHGFSRGPMTHGSKNHREPGSIGPGTTPGRIYPGKRMAG.

The protein belongs to the universal ribosomal protein uL3 family. In terms of assembly, part of the 50S ribosomal subunit. Forms a cluster with proteins L14 and L19.

Functionally, one of the primary rRNA binding proteins, it binds directly near the 3'-end of the 23S rRNA, where it nucleates assembly of the 50S subunit. The chain is Large ribosomal subunit protein uL3 from Parasynechococcus marenigrum (strain WH8102).